A 578-amino-acid polypeptide reads, in one-letter code: MKDTIRQLIQQALTRLVTEGVLPEGLTPAIQVENARDKTHGDFASNIAMMLAKPAGMKPRDLAEKLIAALPSDEQVSKVEIAGPGFLNFFQNTAALAARLDAALADAHLSVRKAGAVQRVVVDLSAPNLAKEMHVGHLRSTIIGDGVANVLTFLGDTVIRQNHVGDWGTQFGMLLAYLQEKPATSDELSDLENFYRAAKQRFDESEEFAERARGLVVKLQAGDAECLALWTRFKDISLSHCQETYERLNVKLTPADVMGESAYNDDLANVVNDLKATGLLVESNGAQCVFLEEFRTADDTPLPVIVQKAGGGYLYATTDLAAIRYRSKVLKADRVLYFVDQRQALHFQQVFEVARRAGFVHDGMQLEHMGFGTMNGADGRPFKTRDGGTVKLIDLLDEAEERAYTLVKEKNPEVAEAELRSIAKAVGISAVKYADLSKHRASDYSFNFDQMLSFEGNTAPYLLYAYTRVAGVFRKLGTPFDASKGQIVLAAPQEQELAARLAQFTETLNNVAEKGTPHVLCAYLYDLAGLFSSFYENCPILGAENPDQQQSRLRLAALTGRTLKQGLDLLGLETLERM.

A 'HIGH' region motif is present at residues 127-137; the sequence is PNLAKEMHVGH.

This sequence belongs to the class-I aminoacyl-tRNA synthetase family. As to quaternary structure, monomer.

The protein resides in the cytoplasm. It carries out the reaction tRNA(Arg) + L-arginine + ATP = L-arginyl-tRNA(Arg) + AMP + diphosphate. This is Arginine--tRNA ligase from Pseudomonas savastanoi pv. phaseolicola (strain 1448A / Race 6) (Pseudomonas syringae pv. phaseolicola (strain 1448A / Race 6)).